The primary structure comprises 466 residues: Argininosuccinate lyase (466 aa).

Belongs to the lyase 1 family. Argininosuccinate lyase subfamily.

Its subcellular location is the cytoplasm. It catalyses the reaction 2-(N(omega)-L-arginino)succinate = fumarate + L-arginine. The protein operates within amino-acid biosynthesis; L-arginine biosynthesis; L-arginine from L-ornithine and carbamoyl phosphate: step 3/3. This is Argininosuccinate lyase from Brucella canis (strain ATCC 23365 / NCTC 10854 / RM-666).